We begin with the raw amino-acid sequence, 59 residues long: MSEVRVRENETLDSALRRFKRQCAMSGIMSEVRKREHYDKPSVKRKKKAEAARRKNAKK.

Residues 32 to 42 (VRKREHYDKPS) are compositionally biased toward basic and acidic residues. Residues 32-59 (VRKREHYDKPSVKRKKKAEAARRKNAKK) form a disordered region. Residues 43 to 59 (VKRKKKAEAARRKNAKK) are compositionally biased toward basic residues.

It belongs to the bacterial ribosomal protein bS21 family.

The sequence is that of Small ribosomal subunit protein bS21 from Clostridioides difficile (strain 630) (Peptoclostridium difficile).